The following is a 364-amino-acid chain: tRNA-specific 2-thiouridylase MnmA (364 aa).

Residues 12 to 19 (GMSGGVDS) and methionine 38 each bind ATP. Residues 98 to 100 (NPD) are interaction with target base in tRNA. Cysteine 103 (nucleophile) is an active-site residue. A disulfide bridge links cysteine 103 with cysteine 199. Glycine 127 contacts ATP. Residues 149 to 151 (KDQ) form an interaction with tRNA region. Cysteine 199 functions as the Cysteine persulfide intermediate in the catalytic mechanism. Positions 307–308 (RY) are interaction with tRNA.

This sequence belongs to the MnmA/TRMU family.

The protein resides in the cytoplasm. It carries out the reaction S-sulfanyl-L-cysteinyl-[protein] + uridine(34) in tRNA + AH2 + ATP = 2-thiouridine(34) in tRNA + L-cysteinyl-[protein] + A + AMP + diphosphate + H(+). Its function is as follows. Catalyzes the 2-thiolation of uridine at the wobble position (U34) of tRNA, leading to the formation of s(2)U34. This is tRNA-specific 2-thiouridylase MnmA from Shouchella clausii (strain KSM-K16) (Alkalihalobacillus clausii).